The primary structure comprises 205 residues: Adenylate kinase (205 aa).

ATP is bound at residue 11-16 (GSGKGT). Residues 31-60 (STGDIFRHNVKSMTPLGVEAKRYIDNGDFV) form an NMP region. Residues threonine 32, arginine 37, 58–60 (DFV), 86–89 (GYPR), and glutamine 93 contribute to the AMP site. Positions 127–137 (KRAEIEGRADD) are LID. Arginine 128 contacts ATP. Positions 134 and 145 each coordinate AMP. Glycine 173 provides a ligand contact to ATP.

The protein belongs to the adenylate kinase family. In terms of assembly, monomer.

Its subcellular location is the cytoplasm. It carries out the reaction AMP + ATP = 2 ADP. It participates in purine metabolism; AMP biosynthesis via salvage pathway; AMP from ADP: step 1/1. Its function is as follows. Catalyzes the reversible transfer of the terminal phosphate group between ATP and AMP. Plays an important role in cellular energy homeostasis and in adenine nucleotide metabolism. This is Adenylate kinase from Micrococcus luteus (strain ATCC 4698 / DSM 20030 / JCM 1464 / CCM 169 / CCUG 5858 / IAM 1056 / NBRC 3333 / NCIMB 9278 / NCTC 2665 / VKM Ac-2230) (Micrococcus lysodeikticus).